Reading from the N-terminus, the 514-residue chain is Acetylcholine receptor subunit gamma (514 aa).

An N-terminal signal peptide occupies residues 1 to 22 (MRCSDLLLLFLLALCVLPGISC). The Extracellular segment spans residues 23 to 241 (RNQEEKLLQD…VIFYLIIQRK (219 aa)). The cysteines at positions 150 and 164 are disulfide-linked. A glycan (N-linked (GlcNAc...) asparagine) is linked at asparagine 163. 3 helical membrane passes run 242 to 266 (PLFYIINIIVPCVLISSMAVLVYFL), 275 to 293 (CTVSINVLLAQTVFLFLIA), and 309 to 330 (YLTFLMVVTVVIVVNAVIVLNV). Over 331–473 (SLRTPNTHSM…WILVGRVIDR (143 aa)) the chain is Cytoplasmic. Tyrosine 386 carries the phosphotyrosine; by Tyr-kinases modification. A helical membrane pass occupies residues 474 to 494 (VCFFIMASLFVCGTIGIFLMA).

It belongs to the ligand-gated ion channel (TC 1.A.9) family. Acetylcholine receptor (TC 1.A.9.1) subfamily. Gamma/CHRNG sub-subfamily. In terms of assembly, pentamer of two alpha chains, and one each of the beta, delta, and gamma chains.

It localises to the postsynaptic cell membrane. The protein localises to the cell membrane. The enzyme catalyses K(+)(in) = K(+)(out). It catalyses the reaction Na(+)(in) = Na(+)(out). After binding acetylcholine, the AChR responds by an extensive change in conformation that affects all subunits and leads to opening of an ion-conducting channel across the plasma membrane. This is Acetylcholine receptor subunit gamma (CHRNG) from Gallus gallus (Chicken).